The primary structure comprises 632 residues: Arginine--tRNA ligase (632 aa).

The 'HIGH' region signature appears at 129–139 (ANPVHPLHVGS).

The protein belongs to the class-I aminoacyl-tRNA synthetase family.

The protein localises to the cytoplasm. The catalysed reaction is tRNA(Arg) + L-arginine + ATP = L-arginyl-tRNA(Arg) + AMP + diphosphate. The protein is Arginine--tRNA ligase of Korarchaeum cryptofilum (strain OPF8).